Consider the following 298-residue polypeptide: Porphobilinogen deaminase (298 aa).

Cys-242 is subject to S-(dipyrrolylmethanemethyl)cysteine.

This sequence belongs to the HMBS family. As to quaternary structure, monomer. It depends on dipyrromethane as a cofactor.

The enzyme catalyses 4 porphobilinogen + H2O = hydroxymethylbilane + 4 NH4(+). Its pathway is porphyrin-containing compound metabolism; protoporphyrin-IX biosynthesis; coproporphyrinogen-III from 5-aminolevulinate: step 2/4. Functionally, tetrapolymerization of the monopyrrole PBG into the hydroxymethylbilane pre-uroporphyrinogen in several discrete steps. The chain is Porphobilinogen deaminase from Fusobacterium nucleatum subsp. nucleatum (strain ATCC 25586 / DSM 15643 / BCRC 10681 / CIP 101130 / JCM 8532 / KCTC 2640 / LMG 13131 / VPI 4355).